A 546-amino-acid polypeptide reads, in one-letter code: MAAKEVKFGDSARKKMLVGVNVLADAVKATLGPKGRNVVLEKSFGAPTITKDGVSVAKEIELKDRFENMGAQLVKDVASKANDEAGDGTTTATVLAQAIVNEGLKAVAAGMNPMDLKRGIDKATIAIVAELKQLAKPCTDSKAIAQVGTISANSDESIGQIIAEAMERVGKEGVITVEEGSGFENELSVVEGMQFDRGYLSPYFINKPDTMVAELDNPLLLLVDKKISNIRELLPVLEGVAKAGRPLLIVAEDVEGEALATLVVNNMRGIVKVAAVKAPGFGDRRKAMLQDIAILTGGTVISEEVGLSLETATLEHLGNAKRVVLNKENTTIIDGAGAQADIEARVAQIRKQIEDTTSDYDKEKLQERLAKLAGGVAVIKVGAGTEVEMKEKKARVEDALHATRAAVEEGVVPGGGVALVRALQAISELKGDNEDQNVGIALLRRAVEAPLRQIVANAGGEPSVVVDKVKQGSGNYGFNAASDTYGDMIEMGILDPAKVTRSALQAAASIGGLMVTTEAMVAEVVEDKPAPAMPDMGGMGGMGGMM.

ATP is bound by residues 30-33, Lys51, 87-91, Gly415, 479-481, and Asp495; these read TLGP, DGTTT, and NAA.

The protein belongs to the chaperonin (HSP60) family. In terms of assembly, forms a cylinder of 14 subunits composed of two heptameric rings stacked back-to-back. Interacts with the co-chaperonin GroES.

The protein resides in the cytoplasm. The catalysed reaction is ATP + H2O + a folded polypeptide = ADP + phosphate + an unfolded polypeptide.. Together with its co-chaperonin GroES, plays an essential role in assisting protein folding. The GroEL-GroES system forms a nano-cage that allows encapsulation of the non-native substrate proteins and provides a physical environment optimized to promote and accelerate protein folding. The chain is Chaperonin GroEL from Stutzerimonas stutzeri (strain A1501) (Pseudomonas stutzeri).